The chain runs to 807 residues: MTQVIVRNSLDKPFGKLANDAEVPLAVKTEDYSSVINYVYSNLLPFGTFREELMATPPSRVLSTFIQMRKHIKKSIIQSSAHTAIMVESERDPVFRQALLETSPQKIVYKSNNKFMGVGEDGTGDNIYGAALEQVRNELQAEKDRDAHQEAVYLAYIAEVNLKKALRKHNLEKYISKDRKRSIKRLVDALVQDYGKTQVFDNSPDIDTIMTLHEKRNIMVYTDPNALIRIVRKNTIRAVLAKNLLELRVAALNAFVDYAISKNVVRSEDKSRLKDQLFDIELGKRNDFSKRILDLFEAKALPDEIKNVIKKFKAQWYFPRDDEIEHFERETVKIPVPQATTTQQATAEPAETYTVSYDSDSVLSPLRRTQALNLNMLLFPTISHFIAFEVNKKYELTSIRGLYDTIKKIPIRTLDAWSKTHEQQTMEQRKLLLLEEAITHKLMDYSVKHLVWAIRDLKFEDKYNPDETTQIYRKYMDKINLRIQKIPSFEEFVEKDPMVHEVVREKVDFYFTILDNLMVHTKYKFNFKVSYDDLVKMSPFHGFILMDSVQISRLPIPDYLQWKNSRYGLSTESLVQIWTIVYNGLKQSEKLVGINDWDIRYKSCFIWAKYLLGQEIRSRRLNVMESRREDEVLLAILSVLFKLKEVNLRFGLSALNFQDLQTALYLCLGRVRQYVPKGNKPDLRPPPTLVADSMFDQPDIQLAPLVEPEEEVDETQVEIYEPEQMDDQEYNEYDYYRDYDEEFEGFNLNARKKFGIFFHEFYAPLENKIQLPELEDAINSFIKSSVPRSVKNQNLNFFITNFRVPDI.

The protein belongs to the IIV-6 155L family.

This is an uncharacterized protein from Aedes vexans (Inland floodwater mosquito).